We begin with the raw amino-acid sequence, 128 residues long: Large ribosomal subunit protein bL12 (128 aa).

This sequence belongs to the bacterial ribosomal protein bL12 family. As to quaternary structure, homodimer. Part of the ribosomal stalk of the 50S ribosomal subunit. Forms a multimeric L10(L12)X complex, where L10 forms an elongated spine to which 2 to 4 L12 dimers bind in a sequential fashion. Binds GTP-bound translation factors.

Functionally, forms part of the ribosomal stalk which helps the ribosome interact with GTP-bound translation factors. Is thus essential for accurate translation. The protein is Large ribosomal subunit protein bL12 of Aquifex aeolicus (strain VF5).